The primary structure comprises 452 residues: Probable glycine dehydrogenase (decarboxylating) subunit 1 (452 aa).

This sequence belongs to the GcvP family. N-terminal subunit subfamily. As to quaternary structure, the glycine cleavage system is composed of four proteins: P, T, L and H. In this organism, the P 'protein' is a heterodimer of two subunits.

It catalyses the reaction N(6)-[(R)-lipoyl]-L-lysyl-[glycine-cleavage complex H protein] + glycine + H(+) = N(6)-[(R)-S(8)-aminomethyldihydrolipoyl]-L-lysyl-[glycine-cleavage complex H protein] + CO2. In terms of biological role, the glycine cleavage system catalyzes the degradation of glycine. The P protein binds the alpha-amino group of glycine through its pyridoxal phosphate cofactor; CO(2) is released and the remaining methylamine moiety is then transferred to the lipoamide cofactor of the H protein. The sequence is that of Probable glycine dehydrogenase (decarboxylating) subunit 1 from Sphingopyxis alaskensis (strain DSM 13593 / LMG 18877 / RB2256) (Sphingomonas alaskensis).